The primary structure comprises 179 residues: Large ribosomal subunit protein uL6 (179 aa).

The protein belongs to the universal ribosomal protein uL6 family. Part of the 50S ribosomal subunit.

In terms of biological role, this protein binds to the 23S rRNA, and is important in its secondary structure. It is located near the subunit interface in the base of the L7/L12 stalk, and near the tRNA binding site of the peptidyltransferase center. The sequence is that of Large ribosomal subunit protein uL6 from Synechococcus sp. (strain RCC307).